A 100-amino-acid chain; its full sequence is Elastin (100 aa).

A 4-hydroxyproline mark is found at Pro-72 and Pro-86. An intrachain disulfide couples Cys-90 to Cys-95.

The protein belongs to the elastin family. As to quaternary structure, the polymeric elastin chains are cross-linked together into an extensible 3D network. Forms a ternary complex with BGN and MFAP2. Interacts with MFAP2 via divalent cations (calcium &gt; magnesium &gt; manganese) in a dose-dependent and saturating manner. Interacts with FBLN5 and FBN1. Forms a ternary complex with FBN1 and FBLN2 or FBLN5. Interacts with MFAP4 in a Ca (2+)-dependent manner; this interaction promotes ELN self-assembly. Interacts with EFEMP2 with moderate affinity. Post-translationally, elastin is formed through the cross-linking of its soluble precursor tropoelastin. Cross-linking is initiated through the action of lysyl oxidase on exposed lysines to form allysine. Subsequent spontaneous condensation reactions with other allysine or unmodified lysine residues result in various bi-, tri-, and tetrafunctional cross-links. The most abundant cross-links in mature elastin fibers are lysinonorleucine, allysine aldol, desmosine, and isodesmosine. In terms of processing, hydroxylation on proline residues within the sequence motif, GXPG, is most likely to be 4-hydroxy as this fits the requirement for 4-hydroxylation in vertebrates.

The protein localises to the secreted. It is found in the extracellular space. It localises to the extracellular matrix. In terms of biological role, major structural protein of tissues such as aorta and nuchal ligament, which must expand rapidly and recover completely. Molecular determinant of the late arterial morphogenesis, stabilizing arterial structure by regulating proliferation and organization of vascular smooth muscle. The chain is Elastin (ELN) from Ovis aries (Sheep).